Consider the following 373-residue polypeptide: D-alanine--D-alanine ligase A (373 aa).

The ATP-grasp domain maps to 146-355 (KRLAEFAGIP…YGELLSRLVD (210 aa)). Residue 179 to 234 (VEGLSLPVFVKPCNMGSSVGIHKVKTQDALEAALDDAFRYDVKVLVQQGIDAREIE) coordinates ATP. Mg(2+)-binding residues include aspartate 308, glutamate 322, and asparagine 324.

This sequence belongs to the D-alanine--D-alanine ligase family. It depends on Mg(2+) as a cofactor. Mn(2+) serves as cofactor.

It is found in the cytoplasm. It catalyses the reaction 2 D-alanine + ATP = D-alanyl-D-alanine + ADP + phosphate + H(+). It participates in cell wall biogenesis; peptidoglycan biosynthesis. In terms of biological role, cell wall formation. The sequence is that of D-alanine--D-alanine ligase A from Bradyrhizobium diazoefficiens (strain JCM 10833 / BCRC 13528 / IAM 13628 / NBRC 14792 / USDA 110).